The following is a 211-amino-acid chain: Succinate dehydrogenase subunit 4, mitochondrial (211 aa).

The transit peptide at 1-36 (MASRLLARSKALALALSRADAAAPGPAAGVQWLRTL) directs the protein to the mitochondrion. The disordered stretch occupies residues 41 to 64 (RDPAAAASPAPAPRQPAVGSPLGL). H166 contributes to the heme binding site. Y179 serves as a coordination point for a ubiquinone. The helical transmembrane segment at 188–210 (WVFIYFKILLIIMAKETVVYFDL) threads the bilayer.

Component of complex II composed of eight subunits in plants: four classical SDH subunits SDH1, SDH2, SDH3 and SDH4 (a flavoprotein (FP), an iron-sulfur protein (IP), and a cytochrome b composed of a large and a small subunit.), as well as four subunits unknown in mitochondria from bacteria and heterotrophic eukaryotes. Heme serves as cofactor.

It localises to the mitochondrion inner membrane. It functions in the pathway carbohydrate metabolism; tricarboxylic acid cycle. In terms of biological role, membrane-anchoring subunit of succinate dehydrogenase (SDH). The chain is Succinate dehydrogenase subunit 4, mitochondrial from Oryza sativa subsp. japonica (Rice).